The sequence spans 144 residues: Large ribosomal subunit protein uL15 (144 aa).

Residues M1–G52 form a disordered region. Positions R21–G31 are enriched in gly residues.

The protein belongs to the universal ribosomal protein uL15 family. As to quaternary structure, part of the 50S ribosomal subunit.

Its function is as follows. Binds to the 23S rRNA. The polypeptide is Large ribosomal subunit protein uL15 (Buchnera aphidicola subsp. Acyrthosiphon kondoi (Acyrthosiphon kondoi symbiotic bacterium)).